A 984-amino-acid chain; its full sequence is Putative formate dehydrogenase SAUSA300_2258 (984 aa).

Residues 3–79 (EHLVVTLDGK…PMTVNTVNND (77 aa)) form the 2Fe-2S ferredoxin-type domain. [2Fe-2S] cluster contacts are provided by Cys37, Cys48, Cys51, and Cys63. Positions 79–119 (DVKDAQKEALDRILEKHMLYCTVCDYNNGDCEIHNTMDAWG) constitute a 4Fe-4S His(Cys)3-ligated-type domain. 16 residues coordinate [4Fe-4S] cluster: His95, Cys99, Cys102, Cys109, Cys147, Cys150, Cys153, Cys157, Cys190, Cys193, Cys196, Cys200, Cys264, Cys267, Cys271, and Cys299. 4Fe-4S ferredoxin-type domains are found at residues 138–165 (PFYR…VNET) and 181–211 (NDVP…VNME). The segment at 252–984 (MRKERIKKTK…YVFPGNQVDK (733 aa)) is formate dehydrogenase. The 57-residue stretch at 257–313 (IKKTKTVCTYCGVGCSFEVWTKDREILKVQPSHDSPANKIATCVKGKFSWGHINSDQ) folds into the 4Fe-4S Mo/W bis-MGD-type domain.

This sequence in the C-terminal section; belongs to the prokaryotic molybdopterin-containing oxidoreductase family. The cofactor is [2Fe-2S] cluster. Requires [4Fe-4S] cluster as cofactor. Mo-bis(molybdopterin guanine dinucleotide) is required as a cofactor.

The catalysed reaction is formate + NAD(+) = CO2 + NADH. The sequence is that of Putative formate dehydrogenase SAUSA300_2258 from Staphylococcus aureus (strain USA300).